Consider the following 241-residue polypeptide: Fatty acid metabolism regulator protein (241 aa).

Residues 11 to 79 (QSPAGLAEEY…HGKPTKVNNI (69 aa)) enclose the HTH gntR-type domain. The segment at residues 39-58 (ERELAEKIGVTRTTLREVLQ) is a DNA-binding region (H-T-H motif).

Homodimer.

The protein localises to the cytoplasm. In terms of biological role, multifunctional regulator of fatty acid metabolism. This Pasteurella multocida (strain Pm70) protein is Fatty acid metabolism regulator protein.